A 304-amino-acid chain; its full sequence is Pseudouridine-5'-phosphate glycosidase (304 aa).

The Proton donor role is filled by E25. The substrate site is built by K86 and V106. D138 is a Mn(2+) binding site. 140 to 142 (SAD) lines the substrate pocket. The Nucleophile role is filled by K159.

It belongs to the pseudouridine-5'-phosphate glycosidase family. As to quaternary structure, homotrimer. Mn(2+) is required as a cofactor.

It carries out the reaction D-ribose 5-phosphate + uracil = psi-UMP + H2O. Catalyzes the reversible cleavage of pseudouridine 5'-phosphate (PsiMP) to ribose 5-phosphate and uracil. Functions biologically in the cleavage direction, as part of a pseudouridine degradation pathway. This Lysinibacillus sphaericus (strain C3-41) protein is Pseudouridine-5'-phosphate glycosidase.